A 368-amino-acid polypeptide reads, in one-letter code: Peptide chain release factor 2 (368 aa).

Position 250 is an N5-methylglutamine (Gln250).

This sequence belongs to the prokaryotic/mitochondrial release factor family. Post-translationally, methylated by PrmC. Methylation increases the termination efficiency of RF2.

The protein resides in the cytoplasm. Its function is as follows. Peptide chain release factor 2 directs the termination of translation in response to the peptide chain termination codons UGA and UAA. The chain is Peptide chain release factor 2 from Mycolicibacterium vanbaalenii (strain DSM 7251 / JCM 13017 / BCRC 16820 / KCTC 9966 / NRRL B-24157 / PYR-1) (Mycobacterium vanbaalenii).